Here is a 216-residue protein sequence, read N- to C-terminus: Octanoyltransferase (216 aa).

One can recognise a BPL/LPL catalytic domain in the interval 33 to 212; sequence AHTPDELWLV…ILSNILGLTA (180 aa). Substrate-binding positions include 72–79, 139–141, and 152–154; these read RGGQVTYH, SLG, and GVA. The active-site Acyl-thioester intermediate is the cysteine 170.

Belongs to the LipB family.

The protein resides in the cytoplasm. It carries out the reaction octanoyl-[ACP] + L-lysyl-[protein] = N(6)-octanoyl-L-lysyl-[protein] + holo-[ACP] + H(+). It participates in protein modification; protein lipoylation via endogenous pathway; protein N(6)-(lipoyl)lysine from octanoyl-[acyl-carrier-protein]: step 1/2. Catalyzes the transfer of endogenously produced octanoic acid from octanoyl-acyl-carrier-protein onto the lipoyl domains of lipoate-dependent enzymes. Lipoyl-ACP can also act as a substrate although octanoyl-ACP is likely to be the physiological substrate. The sequence is that of Octanoyltransferase from Saccharophagus degradans (strain 2-40 / ATCC 43961 / DSM 17024).